The sequence spans 368 residues: Propane 2-monooxygenase, hydroxylase component small subunit (368 aa).

The segment covering 1 to 17 (MSAPEKPRERSFPKIEF) has biased composition (basic and acidic residues). The disordered stretch occupies residues 1-32 (MSAPEKPRERSFPKIEFTDSEAGAKEFPSSKS).

The protein belongs to the TmoE/XamoE family. As to quaternary structure, the propane 2-monooxygenase multicomponent enzyme system is composed of an electron transfer component and a monooxygenase component interacting with the effector protein MimD. The electron transfer component is composed of a reductase (MimB), and the monooxygenase component is formed by a large subunit (MimA) and a small subunit (MimC). Requires the presence of the chaperonin-like protein MimG to ensure a productive folding, resulting of a soluble MimC, which leads to the active form of MimABCD.

It catalyses the reaction propane + NADH + O2 + H(+) = propan-2-ol + NAD(+) + H2O. The catalysed reaction is acetone + NADH + O2 + H(+) = hydroxyacetone + NAD(+) + H2O. The enzyme catalyses butan-2-one + NADH + O2 + H(+) = 1-hydroxy-2-butanone + NAD(+) + H2O. It carries out the reaction phenol + NADH + O2 + H(+) = hydroquinone + NAD(+) + H2O. Component of the propane 2-monooxygenase multicomponent enzyme system which is involved in the degradation of propane via the O2-dependent hydroxylation of propane. Also involved in the degradation of acetone via the O2-dependent hydroxylation of acetone. Also able to catalyze the oxidation of phenol, methylethylketone (2-butanone), 1-propanol and 2-propanol. This Mycolicibacterium smegmatis (strain ATCC 700084 / mc(2)155) (Mycobacterium smegmatis) protein is Propane 2-monooxygenase, hydroxylase component small subunit.